A 213-amino-acid polypeptide reads, in one-letter code: Thiamine-phosphate synthase (213 aa).

Residues 43–47 (QLRDK) and N74 each bind 4-amino-2-methyl-5-(diphosphooxymethyl)pyrimidine. Positions 75 and 94 each coordinate Mg(2+). A 4-amino-2-methyl-5-(diphosphooxymethyl)pyrimidine-binding site is contributed by S113. A 2-[(2R,5Z)-2-carboxy-4-methylthiazol-5(2H)-ylidene]ethyl phosphate-binding site is contributed by 142–144 (TAT). K145 provides a ligand contact to 4-amino-2-methyl-5-(diphosphooxymethyl)pyrimidine. 2-[(2R,5Z)-2-carboxy-4-methylthiazol-5(2H)-ylidene]ethyl phosphate contacts are provided by residues G173 and 193-194 (VS).

This sequence belongs to the thiamine-phosphate synthase family. It depends on Mg(2+) as a cofactor.

The enzyme catalyses 2-[(2R,5Z)-2-carboxy-4-methylthiazol-5(2H)-ylidene]ethyl phosphate + 4-amino-2-methyl-5-(diphosphooxymethyl)pyrimidine + 2 H(+) = thiamine phosphate + CO2 + diphosphate. It carries out the reaction 2-(2-carboxy-4-methylthiazol-5-yl)ethyl phosphate + 4-amino-2-methyl-5-(diphosphooxymethyl)pyrimidine + 2 H(+) = thiamine phosphate + CO2 + diphosphate. The catalysed reaction is 4-methyl-5-(2-phosphooxyethyl)-thiazole + 4-amino-2-methyl-5-(diphosphooxymethyl)pyrimidine + H(+) = thiamine phosphate + diphosphate. It participates in cofactor biosynthesis; thiamine diphosphate biosynthesis; thiamine phosphate from 4-amino-2-methyl-5-diphosphomethylpyrimidine and 4-methyl-5-(2-phosphoethyl)-thiazole: step 1/1. In terms of biological role, condenses 4-methyl-5-(beta-hydroxyethyl)thiazole monophosphate (THZ-P) and 2-methyl-4-amino-5-hydroxymethyl pyrimidine pyrophosphate (HMP-PP) to form thiamine monophosphate (TMP). This Psychrobacter sp. (strain PRwf-1) protein is Thiamine-phosphate synthase.